An 886-amino-acid chain; its full sequence is Neurotrophin 1 (886 aa).

An N-terminal signal peptide occupies residues 1 to 29; sequence MKAGRAFGCLFWALLYCVLYLDLVSGNSA. Residues 30-498 constitute a propeptide that is removed on maturation; it reads DDELMDFDFA…FDDFSLSKKR (469 aa). N-linked (GlcNAc...) asparagine glycans are attached at residues N267 and N317. Positions 321 to 340 are disordered; it reads FQQPSSQEEEKMASSNGGQS. An N-linked (GlcNAc...) asparagine glycan is attached at N353. The tract at residues 369–436 is disordered; sequence RNSAEETEEP…HKPVVTPPNK (68 aa). The region spanning 508 to 597 is the Spaetzle domain; the sequence is MCQSVVRYAR…KVPTCCSCQV (90 aa). 3 disulfide bridges follow: C509–C564, C546–C593, and C553–C595. An N-linked (GlcNAc...) asparagine glycan is attached at N623. Disordered stretches follow at residues 675 to 754 and 789 to 886; these read PGIS…QYHR and VSAP…QSIQ. Over residues 698-710 the composition is skewed to low complexity; it reads YKSSSSSSKKYYS. A compositionally biased stretch (pro residues) spans 797-807; sequence PAPPLPMPPMP. 2 stretches are compositionally biased toward basic residues: residues 815–827 and 874–886; these read HQAHHQQPHHHLH and SRRHYHNRRQSIQ.

Homodimer; disulfide-linked. Detected in the fan-shaped body which is a component of the locomotion center in the central nervous system (CNS) (at protein level). Expressed in the optic lobes and brain.

In terms of biological role, neurotrophin which may function as a ligand for the Toll-related receptors Toll-7 and Tollo. Binds to Toll-7 and probably acts as its ligand in promoting motor axon targeting and neuronal survival in the central nervous system (CNS). Involved in synaptic targeting of ISNb/d motorneurons and also some SNa motorneurons. In larvae, involved in the negative regulation of the tracheal immune response to bacterial infection perhaps by acting as a ligand for the Toll-related receptor Tollo. May be involved in the normal development of specific neurons at the neuromuscular junction. This Drosophila melanogaster (Fruit fly) protein is Neurotrophin 1.